A 383-amino-acid chain; its full sequence is Succinyl-diaminopimelate desuccinylase (383 aa).

Residue histidine 72 coordinates Zn(2+). Residue aspartate 74 is part of the active site. Aspartate 105 provides a ligand contact to Zn(2+). Residue glutamate 137 is the Proton acceptor of the active site. Zn(2+) contacts are provided by glutamate 138, glutamate 167, and histidine 352.

Belongs to the peptidase M20A family. DapE subfamily. As to quaternary structure, homodimer. The cofactor is Zn(2+). Requires Co(2+) as cofactor.

It carries out the reaction N-succinyl-(2S,6S)-2,6-diaminopimelate + H2O = (2S,6S)-2,6-diaminopimelate + succinate. The protein operates within amino-acid biosynthesis; L-lysine biosynthesis via DAP pathway; LL-2,6-diaminopimelate from (S)-tetrahydrodipicolinate (succinylase route): step 3/3. Catalyzes the hydrolysis of N-succinyl-L,L-diaminopimelic acid (SDAP), forming succinate and LL-2,6-diaminopimelate (DAP), an intermediate involved in the bacterial biosynthesis of lysine and meso-diaminopimelic acid, an essential component of bacterial cell walls. The protein is Succinyl-diaminopimelate desuccinylase of Ehrlichia ruminantium (strain Welgevonden).